We begin with the raw amino-acid sequence, 82 residues long: Three-finger toxin MicTx3 (82 aa).

The first 21 residues, 1-21, serve as a signal peptide directing secretion; the sequence is MKTLLLTLVVVTIMCLDLGYT. 4 disulfides stabilise this stretch: C24–C44, C38–C59, C63–C74, and C75–C80.

It belongs to the three-finger toxin family. Short-chain subfamily. In terms of tissue distribution, expressed by the venom gland.

It is found in the secreted. Has been described to inhibit nicotinic acetylcholine receptor (nAChR) alpha-7/CHRNA7 subunits and to bind acetylcholine binding protein (AChBP) (Kd=29.5 nM). In Micrurus corallinus (Brazilian coral snake), this protein is Three-finger toxin MicTx3.